Reading from the N-terminus, the 682-residue chain is DNA-directed RNA polymerase subunit beta' (682 aa).

Residues Cys69, Cys71, Cys87, and Cys90 each contribute to the Zn(2+) site. Mg(2+)-binding residues include Asp489, Asp491, and Asp493.

This sequence belongs to the RNA polymerase beta' chain family. RpoC1 subfamily. As to quaternary structure, in plastids the minimal PEP RNA polymerase catalytic core is composed of four subunits: alpha, beta, beta', and beta''. When a (nuclear-encoded) sigma factor is associated with the core the holoenzyme is formed, which can initiate transcription. The cofactor is Mg(2+). Zn(2+) is required as a cofactor.

It localises to the plastid. It is found in the chloroplast. The catalysed reaction is RNA(n) + a ribonucleoside 5'-triphosphate = RNA(n+1) + diphosphate. Its function is as follows. DNA-dependent RNA polymerase catalyzes the transcription of DNA into RNA using the four ribonucleoside triphosphates as substrates. The sequence is that of DNA-directed RNA polymerase subunit beta' from Oryza nivara (Indian wild rice).